A 149-amino-acid polypeptide reads, in one-letter code: Large ribosomal subunit protein bL9 (149 aa).

Belongs to the bacterial ribosomal protein bL9 family.

Its function is as follows. Binds to the 23S rRNA. In Leptospira borgpetersenii serovar Hardjo-bovis (strain JB197), this protein is Large ribosomal subunit protein bL9.